A 356-amino-acid chain; its full sequence is MSNSNKDHFDMSDLGASLPAAAAALSAEDRAGLVNALKNKLQNLAGQHSDILETLTPQVRKRVDVLRELQSQHDELESHFFEERAALEAKYQKLYEPLYTKRYEIVNGVVEVEGVNEAPMNQEEDKEAGNEKGVPNFWLTAMKTNEILAEEISERDEEALKYLKDIKWCKIDDRKGFKLEFFFDTNPFFTNSVLTKTYHMIDDDDPILEKAIGTKIDWCPGKCLTQKILKKKPKKGSKNAKPIIKTETCESFFNFFKPPQVPEDDDDDDIDEDAAEELQNLMEQDYDIGSTIRDKIIPHAVSWFTGEAAEGDEFEDIEDDDDDDDDDDDEDDEDEEDEDDEEEEKSKKKSSALKVE.

Residues 34–88 are a coiled coil; the sequence is VNALKNKLQNLAGQHSDILETLTPQVRKRVDVLRELQSQHDELESHFFEERAALE. A Nuclear export signal motif is present at residues 55–70; it reads LTPQVRKRVDVLRELQ. A Nuclear localization signal motif is present at residues 230 to 235; the sequence is KKKPKK. The interval 304–356 is disordered; sequence FTGEAAEGDEFEDIEDDDDDDDDDDDEDDEDEEDEDDEEEEKSKKKSSALKVE. Acidic residues predominate over residues 309 to 343; that stretch reads AEGDEFEDIEDDDDDDDDDDDEDDEDEEDEDDEEE. Residues 347–356 show a composition bias toward basic residues; the sequence is KKKSSALKVE.

This sequence belongs to the nucleosome assembly protein (NAP) family. In terms of assembly, can form homomeric and heteromeric protein complexes with NAP1;3. Binds histones H2A and H2B in vivo. Also able to bind histones H1 and H4 in vitro. Interacts with CYCB1;1 and with alpha tubulin.

The protein localises to the nucleus. Its subcellular location is the cytoplasm. Its function is as follows. May modulate chromatin structure by regulation of nucleosome assembly/disassembly. Could function together with B-type cyclins in the regulation of microtubule dynamics. The protein is Nucleosome assembly protein 1;4 (NAP1;4) of Nicotiana tabacum (Common tobacco).